We begin with the raw amino-acid sequence, 89 residues long: DNA/RNA-binding protein Alba (89 aa).

Lysine 11 bears the N6-acetyllysine mark.

It belongs to the histone-like Alba family. In terms of processing, acetylated. Acetylation at Lys-11 decreases DNA-binding affinity.

Its subcellular location is the cytoplasm. It localises to the chromosome. In terms of biological role, binds double-stranded DNA tightly but without sequence specificity. Involved in DNA compaction. The protein is DNA/RNA-binding protein Alba of Thermoplasma volcanium (strain ATCC 51530 / DSM 4299 / JCM 9571 / NBRC 15438 / GSS1).